Consider the following 374-residue polypeptide: Outer membrane protein F (374 aa).

A signal peptide spans 1-21 (MMKRNILAVVIPALLAAGAAN). A beta stranded membrane pass occupies residues 22–27 (AAEIYN). K28 is a topological domain (periplasmic). The beta stranded transmembrane segment at 29–44 (DGNKLDLYGKVDGLHY) threads the bilayer. The Extracellular portion of the chain corresponds to 45–55 (FSKDKGNDGDQ). A beta stranded transmembrane segment spans residues 56-68 (TYVRFGFKGETQI). Over 69–70 (TD) the chain is Periplasmic. Residues 71 to 83 (QLTGYGQWEYNVQ) form a beta stranded membrane-spanning segment. The Extracellular segment spans residues 84–97 (SNHAESQGTEGTKT). The beta stranded transmembrane segment at 98–107 (RLGFAGLKFA) threads the bilayer. Residues 108 to 110 (DYG) are Periplasmic-facing. Residues 111-116 (SFDYGR) form a beta stranded membrane-spanning segment. At 117 to 151 (NYGVLYDVEGWTDMLPEFGGDTYTYSDNFMTGRTN) the chain is on the extracellular side. A beta stranded transmembrane segment spans residues 152-158 (GVATYRN). Topologically, residues 159–166 (NNFFGLVD) are periplasmic. Residues 167-178 (GLNFALQYQGKN) form a beta stranded membrane-spanning segment. Over 179-190 (QNDGRDVKKQNG) the chain is Extracellular. The chain crosses the membrane as a beta stranded span at residues 191-201 (DGWGISSTYDI). Residues 202 to 203 (GE) lie on the Periplasmic side of the membrane. Residues 204–216 (GVSFGAAYASSNR) form a beta stranded membrane-spanning segment. Over 217–230 (TDDQKLRSNERGDK) the chain is Extracellular. Residues 231–242 (ADAWTVGAKYDA) traverse the membrane as a beta stranded segment. Residue N243 is a topological domain, periplasmic. A beta stranded membrane pass occupies residues 244 to 255 (NVYLAAMYAETR). Over 256 to 280 (NMTPFGGGNFTNTCAATENCGGFAS) the chain is Extracellular. A beta stranded membrane pass occupies residues 281–293 (KTQNFEVTAQYQF). At 294 to 295 (DF) the chain is on the periplasmic side. A beta stranded membrane pass occupies residues 296-309 (GLRPEVSYLQSKGK). Topologically, residues 310–322 (NLNVPGVGSDQDL) are extracellular. Residues 323-334 (VKYVSVGTTYYF) traverse the membrane as a beta stranded segment. The Periplasmic portion of the chain corresponds to 335 to 336 (NK). Residues 337-346 (NMSTYVDYKI) form a beta stranded membrane-spanning segment. Residues 347 to 364 (NLLDDNDFTKATGIATDD) lie on the Extracellular side of the membrane. The chain crosses the membrane as a beta stranded span at residues 365 to 374 (IVGVGLVYQF).

It belongs to the Gram-negative porin family. In terms of assembly, homotrimer.

Its subcellular location is the cell outer membrane. Forms pores that allow passive diffusion of small molecules across the outer membrane. This is Outer membrane protein F (ompF) from Serratia marcescens.